Here is a 47-residue protein sequence, read N- to C-terminus: Potassium channel toxin TcoKIK (47 aa).

In terms of domain architecture, BetaSPN-type CS-alpha/beta spans 14–47 (EYACPAIDKFCEDHCAAKKAVGKCDDFKCNCIKL). 3 disulfides stabilise this stretch: C17/C37, C24/C42, and C28/C44.

This sequence belongs to the long chain scorpion toxin family. Class 2 subfamily. Expressed by the venom gland.

It is found in the secreted. It localises to the target cell membrane. In terms of biological role, blocks voltage-gated potassium channels. Its application (10 uM) to cells recombinantly expressing channels results in membrane damage and cell lysis. This is Potassium channel toxin TcoKIK from Tityus costatus (Brazilian scorpion).